We begin with the raw amino-acid sequence, 200 residues long: Rho-related protein racD (200 aa).

7 residues coordinate GTP: Ala-20, Gly-22, Lys-23, Thr-24, Cys-25, Tyr-39, and Thr-42. Residue Thr-24 coordinates Mg(2+). 2 consecutive short sequence motifs (switch) follow at residues 33–44 (NEFPKDYVPTVF) and 64–82 (DTAG…YPNT). Thr-42 contributes to the Mg(2+) binding site. Lys-123, Asp-125, and Ala-166 together coordinate GTP. At Cys-197 the chain carries Cysteine methyl ester. Cys-197 carries the S-geranylgeranyl cysteine lipid modification. Residues 198–200 (ALL) constitute a propeptide, removed in mature form.

Belongs to the small GTPase superfamily. Rho family. Mg(2+) serves as cofactor.

It is found in the cell membrane. The protein localises to the cytoplasm. It localises to the cytoskeleton. It carries out the reaction GTP + H2O = GDP + phosphate + H(+). Its activity is regulated as follows. Regulated by guanine nucleotide exchange factors (GEFs) which promote the exchange of bound GDP for free GTP, GTPase activating proteins (GAPs) which increase the GTP hydrolysis activity, and GDP dissociation inhibitors which inhibit the dissociation of the nucleotide from the GTPase. Functionally, small GTPase which cycles between active GTP-bound and inactive GDP-bound states. In Entamoeba histolytica (strain ATCC 30459 / HM-1:IMSS / ABRM), this protein is Rho-related protein racD.